We begin with the raw amino-acid sequence, 235 residues long: Acyl-protein thioesterase 1 (235 aa).

Catalysis depends on charge relay system residues Ser119, Asp172, and His206.

This sequence belongs to the AB hydrolase superfamily. AB hydrolase 2 family.

The protein resides in the cytoplasm. Its subcellular location is the nucleus. It catalyses the reaction S-hexadecanoyl-L-cysteinyl-[protein] + H2O = L-cysteinyl-[protein] + hexadecanoate + H(+). Functionally, hydrolyzes fatty acids from S-acylated cysteine residues in proteins with a strong preference for palmitoylated G-alpha proteins over other acyl substrates. Mediates the deacylation of G-alpha proteins such as GPA1 in vivo, but has weak or no activity toward palmitoylated Ras proteins. Has weak lysophospholipase activity in vitro; however such activity may not exist in vivo. The chain is Acyl-protein thioesterase 1 from Eremothecium gossypii (strain ATCC 10895 / CBS 109.51 / FGSC 9923 / NRRL Y-1056) (Yeast).